Here is a 346-residue protein sequence, read N- to C-terminus: NADH-ubiquinone oxidoreductase chain 2 (346 aa).

Helical transmembrane passes span 1–21 (MSPYISPLFSITMIMSVMLIS), 26–46 (WVFMWLGLELGTLAFIPILVW), 60–80 (FIVQAMAAAVFFLGGMVSLSG), 96–116 (MMIMLAVVTKLGLAPFHYWVV), 122–142 (LNYIPGAVLLTWQKVPGLAVL), 151–171 (SSMLLLFGMVSALVGGLGGLG), 178–198 (LLAFSSISHLGWLVVGCVAGS), 199–219 (LLGLSYFTLYVILSIPLFSIL), 242–262 (VLLGVGFLSLGGLPPFFGFFG), 274–294 (LLLGVSVVLITGTLISLFYYL), and 320–340 (LSGLMSGLLVLNMLGLFLVGG).

Belongs to the complex I subunit 2 family.

Its subcellular location is the mitochondrion inner membrane. The enzyme catalyses a ubiquinone + NADH + 5 H(+)(in) = a ubiquinol + NAD(+) + 4 H(+)(out). Core subunit of the mitochondrial membrane respiratory chain NADH dehydrogenase (Complex I) that is believed to belong to the minimal assembly required for catalysis. Complex I functions in the transfer of electrons from NADH to the respiratory chain. The immediate electron acceptor for the enzyme is believed to be ubiquinone. This chain is NADH-ubiquinone oxidoreductase chain 2 (ND2), found in Branchiostoma lanceolatum (Common lancelet).